Here is a 310-residue protein sequence, read N- to C-terminus: Olfactory receptor 7A42 (310 aa).

The Extracellular portion of the chain corresponds to 1–25 (MESGNSTRRIPSFFLLGFSENPHLQ). N5 carries an N-linked (GlcNAc...) asparagine glycan. Residues 26–46 (FLIFVLFLSMYLVTVLGNLLI) form a helical membrane-spanning segment. The Cytoplasmic segment spans residues 47–67 (IMVIITQSPLHTPMYFFLANL). A helical transmembrane segment spans residues 68–88 (SFVDICFTSTTVPKMLVNIQT). The Extracellular portion of the chain corresponds to 89 to 100 (QSKAITYADCIS). C98 and C190 form a disulfide bridge. A helical membrane pass occupies residues 101-121 (QMSVFLVFAELDNFLLAVMAY). At 122–135 (DRYVAICHPLYYTF) the chain is on the cytoplasmic side. The chain crosses the membrane as a helical span at residues 136–156 (IVNQHLCILMVLLSWVVSILH). The Extracellular segment spans residues 157 to 202 (AFLQSSIVLQLTFCGDVKIPHFFCELNQLSQLTCLDSLSSHLIMNL). The helical transmembrane segment at 203–223 (VPVLLAVISFSSILYSYFKIV) threads the bilayer. The Cytoplasmic portion of the chain corresponds to 224-240 (SSICSISSVQGKYTAFS). The helical transmembrane segment at 241-261 (TCVSHLSIVFLFYSTGLGVYV) threads the bilayer. At 262 to 272 (SSAVVQSSHSA) the chain is on the extracellular side. A helical membrane pass occupies residues 273–293 (ARASVMYTVVTPMLNPFIYSL). Topologically, residues 294-310 (RNKDVKKALERLLEGKL) are cytoplasmic.

Belongs to the G-protein coupled receptor 1 family.

The protein resides in the cell membrane. Its function is as follows. Odorant receptor. The polypeptide is Olfactory receptor 7A42 (Mus musculus (Mouse)).